Consider the following 247-residue polypeptide: tRNA (guanine-N(1)-)-methyltransferase (247 aa).

S-adenosyl-L-methionine is bound by residues G112 and I132–L137.

Belongs to the RNA methyltransferase TrmD family. Homodimer.

The protein localises to the cytoplasm. The enzyme catalyses guanosine(37) in tRNA + S-adenosyl-L-methionine = N(1)-methylguanosine(37) in tRNA + S-adenosyl-L-homocysteine + H(+). In terms of biological role, specifically methylates guanosine-37 in various tRNAs. The chain is tRNA (guanine-N(1)-)-methyltransferase from Geotalea uraniireducens (strain Rf4) (Geobacter uraniireducens).